Here is a 458-residue protein sequence, read N- to C-terminus: Protein adenylyltransferase FICD (458 aa).

The Cytoplasmic portion of the chain corresponds to Met-1–Arg-23. The helical; Signal-anchor for type II membrane protein transmembrane segment at Phe-24–Leu-44 threads the bilayer. Over Gly-45–Pro-458 the chain is Lumenal. Residue Ser-79 is modified to O-AMP-serine; by autocatalysis. O-AMP-threonine; by autocatalysis is present on Thr-80. 2 TPR repeats span residues Ala-106 to Phe-139 and Val-140 to His-173. Residue Thr-183 is modified to O-AMP-threonine; by autocatalysis. The Inhibitory (S/T)XXXE(G/N) motif motif lies at Thr-230 to Gly-235. An ATP-binding site is contributed by Glu-234. N-linked (GlcNAc...) asparagine glycosylation is present at Asn-275. The 136-residue stretch at Val-285–Lys-420 folds into the Fido domain. Val-316–His-319 contacts ATP. His-363 is a catalytic residue. Residues Asp-367 to Arg-374, Tyr-399 to Tyr-400, and Asn-407 contribute to the ATP site. A glycan (N-linked (GlcNAc...) asparagine) is linked at Asn-446.

The protein belongs to the fic family. As to quaternary structure, homodimer. Interacts with HD. Mg(2+) serves as cofactor. The cofactor is Mn(2+). In terms of processing, auto-AMPylated in vitro; it is unclear whether auto-AMPylation is relevant in vivo. N-glycosylated; predominantly glycosylated at Asn-275. Ubiquitous.

The protein localises to the endoplasmic reticulum membrane. The enzyme catalyses L-tyrosyl-[protein] + ATP = O-(5'-adenylyl)-L-tyrosyl-[protein] + diphosphate. It carries out the reaction 3-O-(5'-adenylyl)-L-threonyl-[protein] + H2O = L-threonyl-[protein] + AMP + H(+). It catalyses the reaction L-threonyl-[protein] + ATP = 3-O-(5'-adenylyl)-L-threonyl-[protein] + diphosphate. With respect to regulation, the side chain of Glu-234 determines which of the two opposing activities (AMPylase or de-AMPylase) will take place. In response to endoplasmic reticulum stress, mediates de-AMPylase activity. Adenylyltransferase activity is inhibited by the inhibitory helix present at the N-terminus: Glu-234 binds ATP and competes with ATP-binding at Arg-374, thereby preventing adenylyltransferase activity. In unstressed cells, disengagement of Glu-234 promotes adenylyltransferase activity. Activation dissociates ATP-binding from Glu-234, allowing ordered binding of the entire ATP moiety with the alpha-phosphate in an orientation that is productive for accepting an incoming target hydroxyl side chain. In terms of biological role, protein that can both mediate the addition of adenosine 5'-monophosphate (AMP) to specific residues of target proteins (AMPylation), and the removal of the same modification from target proteins (de-AMPylation), depending on the context. The side chain of Glu-231 determines which of the two opposing activities (AMPylase or de-AMPylase) will take place. Acts as a key regulator of the ERN1/IRE1-mediated unfolded protein response (UPR) by mediating AMPylation or de-AMPylation of HSPA5/BiP. In unstressed cells, acts as an adenylyltransferase by mediating AMPylation of HSPA5/BiP at 'Thr-518', thereby inactivating it. In response to endoplasmic reticulum stress, acts as a phosphodiesterase by mediating removal of ATP (de-AMPylation) from HSPA5/BiP at 'Thr-518', leading to restore HSPA5/BiP activity. Although it is able to AMPylate RhoA, Rac and Cdc42 Rho GTPases in vitro, Rho GTPases do not constitute physiological substrates. This chain is Protein adenylyltransferase FICD, found in Homo sapiens (Human).